The sequence spans 121 residues: Large ribosomal subunit protein eL34B (121 aa).

It belongs to the eukaryotic ribosomal protein eL34 family. As to quaternary structure, component of the large ribosomal subunit (LSU). Mature yeast ribosomes consist of a small (40S) and a large (60S) subunit. The 40S small subunit contains 1 molecule of ribosomal RNA (18S rRNA) and 33 different proteins (encoded by 57 genes). The large 60S subunit contains 3 rRNA molecules (25S, 5.8S and 5S rRNA) and 46 different proteins (encoded by 81 genes).

The protein resides in the cytoplasm. Component of the ribosome, a large ribonucleoprotein complex responsible for the synthesis of proteins in the cell. The small ribosomal subunit (SSU) binds messenger RNAs (mRNAs) and translates the encoded message by selecting cognate aminoacyl-transfer RNA (tRNA) molecules. The large subunit (LSU) contains the ribosomal catalytic site termed the peptidyl transferase center (PTC), which catalyzes the formation of peptide bonds, thereby polymerizing the amino acids delivered by tRNAs into a polypeptide chain. The nascent polypeptides leave the ribosome through a tunnel in the LSU and interact with protein factors that function in enzymatic processing, targeting, and the membrane insertion of nascent chains at the exit of the ribosomal tunnel. The polypeptide is Large ribosomal subunit protein eL34B (Saccharomyces cerevisiae (strain ATCC 204508 / S288c) (Baker's yeast)).